The chain runs to 482 residues: tRNA sulfurtransferase (482 aa).

The region spanning 61-165 (QQVLEILTTT…DDKLNQILAH (105 aa)) is the THUMP domain. ATP contacts are provided by residues 183–184 (LI), Lys265, Gly287, and Gln296. The cysteines at positions 344 and 456 are disulfide-linked. Residues 404 to 482 (IEEHAVVLDI…GFNNVKVYRP (79 aa)) form the Rhodanese domain. Cys456 serves as the catalytic Cysteine persulfide intermediate.

The protein belongs to the ThiI family.

The protein localises to the cytoplasm. The enzyme catalyses [ThiI sulfur-carrier protein]-S-sulfanyl-L-cysteine + a uridine in tRNA + 2 reduced [2Fe-2S]-[ferredoxin] + ATP + H(+) = [ThiI sulfur-carrier protein]-L-cysteine + a 4-thiouridine in tRNA + 2 oxidized [2Fe-2S]-[ferredoxin] + AMP + diphosphate. It carries out the reaction [ThiS sulfur-carrier protein]-C-terminal Gly-Gly-AMP + S-sulfanyl-L-cysteinyl-[cysteine desulfurase] + AH2 = [ThiS sulfur-carrier protein]-C-terminal-Gly-aminoethanethioate + L-cysteinyl-[cysteine desulfurase] + A + AMP + 2 H(+). It participates in cofactor biosynthesis; thiamine diphosphate biosynthesis. Functionally, catalyzes the ATP-dependent transfer of a sulfur to tRNA to produce 4-thiouridine in position 8 of tRNAs, which functions as a near-UV photosensor. Also catalyzes the transfer of sulfur to the sulfur carrier protein ThiS, forming ThiS-thiocarboxylate. This is a step in the synthesis of thiazole, in the thiamine biosynthesis pathway. The sulfur is donated as persulfide by IscS. This Vibrio vulnificus (strain YJ016) protein is tRNA sulfurtransferase.